Here is a 337-residue protein sequence, read N- to C-terminus: Holliday junction branch migration complex subunit RuvB (337 aa).

The interval Ala-4–Tyr-184 is large ATPase domain (RuvB-L). Residues Ile-23, Arg-24, Gly-65, Lys-68, Thr-69, Thr-70, Glu-131–Tyr-133, Arg-174, Tyr-184, and Arg-221 each bind ATP. Thr-69 is a Mg(2+) binding site. Residues Lys-185–Asp-255 are small ATPAse domain (RuvB-S). Residues Asn-258 to Gly-337 form a head domain (RuvB-H) region. DNA is bound by residues Arg-313 and Arg-318.

It belongs to the RuvB family. Homohexamer. Forms an RuvA(8)-RuvB(12)-Holliday junction (HJ) complex. HJ DNA is sandwiched between 2 RuvA tetramers; dsDNA enters through RuvA and exits via RuvB. An RuvB hexamer assembles on each DNA strand where it exits the tetramer. Each RuvB hexamer is contacted by two RuvA subunits (via domain III) on 2 adjacent RuvB subunits; this complex drives branch migration. In the full resolvosome a probable DNA-RuvA(4)-RuvB(12)-RuvC(2) complex forms which resolves the HJ.

The protein resides in the cytoplasm. The enzyme catalyses ATP + H2O = ADP + phosphate + H(+). The RuvA-RuvB-RuvC complex processes Holliday junction (HJ) DNA during genetic recombination and DNA repair, while the RuvA-RuvB complex plays an important role in the rescue of blocked DNA replication forks via replication fork reversal (RFR). RuvA specifically binds to HJ cruciform DNA, conferring on it an open structure. The RuvB hexamer acts as an ATP-dependent pump, pulling dsDNA into and through the RuvAB complex. RuvB forms 2 homohexamers on either side of HJ DNA bound by 1 or 2 RuvA tetramers; 4 subunits per hexamer contact DNA at a time. Coordinated motions by a converter formed by DNA-disengaged RuvB subunits stimulates ATP hydrolysis and nucleotide exchange. Immobilization of the converter enables RuvB to convert the ATP-contained energy into a lever motion, pulling 2 nucleotides of DNA out of the RuvA tetramer per ATP hydrolyzed, thus driving DNA branch migration. The RuvB motors rotate together with the DNA substrate, which together with the progressing nucleotide cycle form the mechanistic basis for DNA recombination by continuous HJ branch migration. Branch migration allows RuvC to scan DNA until it finds its consensus sequence, where it cleaves and resolves cruciform DNA. This is Holliday junction branch migration complex subunit RuvB from Tolumonas auensis (strain DSM 9187 / NBRC 110442 / TA 4).